The sequence spans 296 residues: uncharacterized protein (296 aa).

The next 6 membrane-spanning stretches (helical) occupy residues 1–21 (MVNL…IFDY), 30–50 (LITA…GFWL), 71–91 (FISF…FVLC), 92–112 (LAQL…STLA), 113–133 (IGLA…LVLF), and 142–162 (IEVA…TTIC).

The protein belongs to the MscS (TC 1.A.23) family.

The protein localises to the cell membrane. This is an uncharacterized protein from Synechocystis sp. (strain ATCC 27184 / PCC 6803 / Kazusa).